The following is an 892-amino-acid chain: Gamma-tubulin small complex component GCP3 (892 aa).

The protein belongs to the TUBGCP family. Component of the gamma-tubulin small complex (gamma-TuSC) composed of tubulin gamma chain, gamma-tubulin complex protein 2 (GCP2) and gamma-tubulin complex protein 3 (GCP3). Interacts with tubulin gamma chain.

The protein resides in the cytoplasm. It localises to the cytoskeleton. It is found in the flagellum axoneme. Its subcellular location is the flagellum basal body. Its function is as follows. Component of the gamma-tubulin small complex (gamma-TuSC) involved in microtubule (MT) nucleation for the formation of median bodies and in the biogenesis of flagella. Gamma-TuSC may be required for the correct positioning of EB1 within the trophozoites. This chain is Gamma-tubulin small complex component GCP3, found in Giardia intestinalis (strain ATCC 50803 / WB clone C6) (Giardia lamblia).